The sequence spans 224 residues: UPF0758 protein VF_0126 (224 aa).

Residues 102–224 enclose the MPN domain; the sequence is ALTSPEHTKR…IVSFAERGWI (123 aa). Zn(2+) is bound by residues histidine 173, histidine 175, and aspartate 186. Positions 173–186 match the JAMM motif motif; the sequence is HNHPSGVAEPSQAD.

This sequence belongs to the UPF0758 family.

The polypeptide is UPF0758 protein VF_0126 (Aliivibrio fischeri (strain ATCC 700601 / ES114) (Vibrio fischeri)).